The following is a 150-amino-acid chain: Cytochrome c-type biogenesis protein CcmE (150 aa).

The Cytoplasmic portion of the chain corresponds to 1–7 (MTRKQKR). A helical; Signal-anchor for type II membrane protein transmembrane segment spans residues 8–28 (LAIIGGGVGFLTAAVLLVMFA). At 29 to 150 (FSQAVAYFYV…VTLGGKENIQ (122 aa)) the chain is on the periplasmic side. The heme site is built by His123 and Tyr127.

It belongs to the CcmE/CycJ family.

The protein localises to the cell inner membrane. Heme chaperone required for the biogenesis of c-type cytochromes. Transiently binds heme delivered by CcmC and transfers the heme to apo-cytochromes in a process facilitated by CcmF and CcmH. This is Cytochrome c-type biogenesis protein CcmE from Sinorhizobium fredii (strain NBRC 101917 / NGR234).